The primary structure comprises 284 residues: uncharacterized protein (284 aa).

Residues 12-32 traverse the membrane as a helical segment; the sequence is ILFILFVVAFCVYLVPRVAIN.

The protein belongs to the serine esterase family.

It is found in the membrane. This is an uncharacterized protein from Escherichia coli O157:H7.